Consider the following 384-residue polypeptide: MDNQVLEQKIVNEEYKIWKKNVPYLYDLMFSHTLEWPSLSVQWFPDVRRDEEAGRTTQRLLLSTHTSGSEEEYILIAKVEFPDEFDESLNEEVGGDMRLKIIQRISIMDEANRVRYNPSACNVLAVRSDLPDIHVYDYTKHLSHEKIPRPDMVLRGHSAGGFGLSWNHLNPGELAGCGEGGEVCVFDVSQESSSISPTVVLRRHETAVNDCAFSFFDKKLLSSAGDGGMVVLWDTRSEDCIHAIEEAHTSDILSVRFSPLDGNVIATSSCDGSVKVWDRRSLSQPLHILLGHSKDVVSVEWSPHNDKVLASGSTDRRVIVWDLGQAGAEVPEEYKAEGPPEMKFLHGGHTSTVCDISWNPAEPFEIASVSEDNILQIWQMPQPE.

WD repeat units lie at residues 156 to 196, 203 to 243, 247 to 287, 291 to 331, and 348 to 384; these read GHSA…SSIS, RHET…CIHA, AHTS…QPLH, GHSK…AEVP, and GHTSTVCDISWNPAEPFEIASVSEDNILQIWQMPQPE.

This sequence belongs to the WD repeat RBAP46/RBAP48/MSI1 family. Component of the HAT-B complex.

The protein resides in the cytoplasm. The protein localises to the nucleus. Functionally, regulatory subunit of the histone acetylase B (HAT-B) complex. The complex acetylates histone H4 which is required for telomeric silencing. In Encephalitozoon cuniculi (strain GB-M1) (Microsporidian parasite), this protein is Histone acetyltransferase type B subunit 2 (HAT2).